A 1032-amino-acid polypeptide reads, in one-letter code: Contactin-1a (1032 aa).

An N-terminal signal peptide occupies residues 1–31 (MIPEAFQPRAMKHTTTVLMLALSSRFWSVCA). 6 consecutive Ig-like C2-type domains span residues 46–139 (PVFE…ARVQ), 144–231 (DMFS…KSVF), 249–335 (PADI…THLY), 340–417 (PDWL…AELR), 423–510 (PSFQ…GSLS), and 515–612 (TKIT…AELV). Cystine bridges form between Cys-70–Cys-122 and Cys-166–Cys-219. N-linked (GlcNAc...) asparagine glycosylation is found at Asn-119, Asn-216, and Asn-266. Disulfide bonds link Cys-271–Cys-319, Cys-361–Cys-401, and Cys-446–Cys-494. Asn-455, Asn-467, Asn-483, and Asn-504 each carry an N-linked (GlcNAc...) asparagine glycan. Cys-536 and Cys-596 are oxidised to a cystine. N-linked (GlcNAc...) asparagine glycosylation occurs at Asn-604. 4 Fibronectin type-III domains span residues 619–718 (PPGG…TREA), 723–820 (APSD…SAQD), 825–918 (APII…TKKS), and 920–1015 (PSRP…APAP). Residues 699 to 729 (NTLGTGPPSEPSPKTTTREARPIVAPSDIGG) form a disordered region. N-linked (GlcNAc...) asparagine glycosylation is present at Asn-879. Residues 907-926 (ASQRNRIYTKKSPPSRPPKI) form a disordered region. Asn-950 carries N-linked (GlcNAc...) asparagine glycosylation. Gly-1010 carries GPI-anchor amidated glycine lipidation. The propeptide at 1011–1032 (SAPAPALASALLLLPLLWTLML) is removed in mature form.

Belongs to the immunoglobulin superfamily. Contactin family. In terms of tissue distribution, expressed in brain.

The protein resides in the cell membrane. Its function is as follows. Mediates cell surface interactions during nervous system development. The sequence is that of Contactin-1a (cntn1a) from Danio rerio (Zebrafish).